Reading from the N-terminus, the 219-residue chain is Large ribosomal subunit protein uL4 (219 aa).

The segment at 43 to 100 (AAKRQGTHSTKTRGEVSGGGKKPYRQKGTGRARQGSTRAPQFTGGGTVHGPQPRDYSQ) is disordered.

Belongs to the universal ribosomal protein uL4 family. As to quaternary structure, part of the 50S ribosomal subunit.

Its function is as follows. One of the primary rRNA binding proteins, this protein initially binds near the 5'-end of the 23S rRNA. It is important during the early stages of 50S assembly. It makes multiple contacts with different domains of the 23S rRNA in the assembled 50S subunit and ribosome. Forms part of the polypeptide exit tunnel. This Mycobacterium sp. (strain JLS) protein is Large ribosomal subunit protein uL4.